We begin with the raw amino-acid sequence, 781 residues long: Cadherin-24 (781 aa).

A signal peptide spans 1-22 (MWGLVRLLLAWLGGWGCMGRLA). Residues 23-44 (APVPAWAGSRGHSGPTLLRTRR) constitute a propeptide that is removed on maturation. The Extracellular segment spans residues 45 to 603 (SWVWNQFFVI…LSPTGLSTGA (559 aa)). 5 Cadherin domains span residues 46-150 (WVWN…PPVF), 151-259 (PLGP…PPKF), 260-374 (PQSL…PPAF), 375-479 (TQAT…APQL), and 479-592 (LAEP…WPEA). Residues Asn-446, Asn-510, and Asn-525 are each glycosylated (N-linked (GlcNAc...) asparagine). The chain crosses the membrane as a helical span at residues 604 to 624 (LLAIVTCMGTLLALVVLFVAL). The Cytoplasmic portion of the chain corresponds to 625–781 (RRQKQEALMV…LYGAKEPPAP (157 aa)). Disordered stretches follow at residues 665–700 (LQNPDGAAPPAAGPPVRRDVLPRTRAPRQPRPPGPA) and 731–762 (EGRGSSCGSLSSLGSGSEAGGVPGPAEPLDDW). Low complexity predominate over residues 733-746 (RGSSCGSLSSLGSG).

As to quaternary structure, associates with alpha-, beta- and delta-catenins.

It is found in the cell membrane. Functionally, cadherins are calcium-dependent cell adhesion proteins. They preferentially interact with themselves in a homophilic manner in connecting cells; cadherins may thus contribute to the sorting of heterogeneous cell types. Cadherin-24 mediate strong cell-cell adhesion. This chain is Cadherin-24 (Cdh24), found in Mus musculus (Mouse).